Reading from the N-terminus, the 424-residue chain is MAAESDVLHFQFEQQGDVVLQKMNLLRQQNLFCDVSIYINDTEFQGHKVILAACSTFMRDQFLLTQSKHVRITILQSAEVGRKLLLSCYTGALEVKRKELLKYLTAASYLQMVHIVEKCTEALSKYLEIDLSMKNNNQHVDLCQSSDRDVKNEDENSDKDCEIIEISEDSPVNIDFHVKEEESNVLQSTVESLTTEREEMRSPELSSVDMSFKDNEIRILHVESISTGGVENGKFSQPCTSSKASMYFSETQHSLINSTVESRVAEVPGNQDQGLFCENTEGSHGPVNEIQNLEDAFSLRHQCPRCPRGFLHVENYLRHLKMHKLFLCLQCGKTFTQKKNLNRHIRGHMGIRPFQCTVCLKTFTAKSTLQDHLNIHSGDRPYKCHCCDMDFKHKSALKKHLTSLHGRSSGEKLPRHDLERQNLL.

Positions 33–97 constitute a BTB domain; it reads CDVSIYINDT…CYTGALEVKR (65 aa). Position 202 is a phosphoserine (Ser-202). C2H2-type zinc fingers lie at residues 301–323, 326–348, 354–376, and 382–405; these read HQCPRCPRGFLHVENYLRHLKMH, FLCLQCGKTFTQKKNLNRHIRGH, FQCTVCLKTFTAKSTLQDHLNIH, and YKCHCCDMDFKHKSALKKHLTSLH. The segment at 403 to 424 is disordered; that stretch reads SLHGRSSGEKLPRHDLERQNLL. Positions 408–424 are enriched in basic and acidic residues; the sequence is SSGEKLPRHDLERQNLL.

It is found in the nucleus. May be involved in transcriptional regulation. The chain is Zinc finger and BTB domain-containing protein 6 (ZBTB6) from Bos taurus (Bovine).